The chain runs to 338 residues: Ketol-acid reductoisomerase (NADP(+)) (338 aa).

Residues 1-181 (MKVYYDKDAD…GGTKGGVIET (181 aa)) enclose the KARI N-terminal Rossmann domain. NADP(+)-binding positions include 24 to 27 (YGSQ), arginine 47, and serine 52. Histidine 107 is a catalytic residue. NADP(+) is bound at residue glycine 133. The KARI C-terminal knotted domain occupies 182–327 (NFREETETDL…GQLRDMMPWI (146 aa)). Mg(2+) contacts are provided by aspartate 190, glutamate 194, glutamate 226, and glutamate 230. Residue serine 251 coordinates substrate.

Belongs to the ketol-acid reductoisomerase family. Mg(2+) is required as a cofactor.

The enzyme catalyses (2R)-2,3-dihydroxy-3-methylbutanoate + NADP(+) = (2S)-2-acetolactate + NADPH + H(+). It carries out the reaction (2R,3R)-2,3-dihydroxy-3-methylpentanoate + NADP(+) = (S)-2-ethyl-2-hydroxy-3-oxobutanoate + NADPH + H(+). It functions in the pathway amino-acid biosynthesis; L-isoleucine biosynthesis; L-isoleucine from 2-oxobutanoate: step 2/4. It participates in amino-acid biosynthesis; L-valine biosynthesis; L-valine from pyruvate: step 2/4. In terms of biological role, involved in the biosynthesis of branched-chain amino acids (BCAA). Catalyzes an alkyl-migration followed by a ketol-acid reduction of (S)-2-acetolactate (S2AL) to yield (R)-2,3-dihydroxy-isovalerate. In the isomerase reaction, S2AL is rearranged via a Mg-dependent methyl migration to produce 3-hydroxy-3-methyl-2-ketobutyrate (HMKB). In the reductase reaction, this 2-ketoacid undergoes a metal-dependent reduction by NADPH to yield (R)-2,3-dihydroxy-isovalerate. This is Ketol-acid reductoisomerase (NADP(+)) from Aromatoleum aromaticum (strain DSM 19018 / LMG 30748 / EbN1) (Azoarcus sp. (strain EbN1)).